The sequence spans 581 residues: Kelch-like protein 38 (581 aa).

Residues 34-101 form the BTB domain; sequence TDVSICSGAW…VYTGEVHISA (68 aa). One can recognise a BACK domain in the interval 136-237; sequence CLGLVRLAEI…HPAFFHHFIA (102 aa). Kelch repeat units lie at residues 285–332, 334–383, 384–431, 433–479, 480–521, and 523–573; these read FLLL…TLHR, VYVL…THRN, FIFS…VKDQ, LYLF…VLGE, QIVI…VMGN, and LYVT…TLQC.

The sequence is that of Kelch-like protein 38 (Klhl38) from Mus musculus (Mouse).